Here is a 427-residue protein sequence, read N- to C-terminus: Enolase (427 aa).

Gln163 lines the (2R)-2-phosphoglycerate pocket. Residue Glu205 is the Proton donor of the active site. Positions 242, 285, and 312 each coordinate Mg(2+). Lys337, Arg366, Ser367, and Lys388 together coordinate (2R)-2-phosphoglycerate. The Proton acceptor role is filled by Lys337.

Belongs to the enolase family. Mg(2+) serves as cofactor.

The protein resides in the cytoplasm. It is found in the secreted. It localises to the cell surface. The catalysed reaction is (2R)-2-phosphoglycerate = phosphoenolpyruvate + H2O. It functions in the pathway carbohydrate degradation; glycolysis; pyruvate from D-glyceraldehyde 3-phosphate: step 4/5. Functionally, catalyzes the reversible conversion of 2-phosphoglycerate (2-PG) into phosphoenolpyruvate (PEP). It is essential for the degradation of carbohydrates via glycolysis. The polypeptide is Enolase (Nitrobacter hamburgensis (strain DSM 10229 / NCIMB 13809 / X14)).